Here is a 319-residue protein sequence, read N- to C-terminus: Acetyl-coenzyme A carboxylase carboxyl transferase subunit alpha (319 aa).

The CoA carboxyltransferase C-terminal domain occupies 35–296 (NIDEEVHRLR…KAQLLEDLAD (262 aa)).

It belongs to the AccA family. As to quaternary structure, acetyl-CoA carboxylase is a heterohexamer composed of biotin carboxyl carrier protein (AccB), biotin carboxylase (AccC) and two subunits each of ACCase subunit alpha (AccA) and ACCase subunit beta (AccD).

The protein localises to the cytoplasm. The catalysed reaction is N(6)-carboxybiotinyl-L-lysyl-[protein] + acetyl-CoA = N(6)-biotinyl-L-lysyl-[protein] + malonyl-CoA. The protein operates within lipid metabolism; malonyl-CoA biosynthesis; malonyl-CoA from acetyl-CoA: step 1/1. Its function is as follows. Component of the acetyl coenzyme A carboxylase (ACC) complex. First, biotin carboxylase catalyzes the carboxylation of biotin on its carrier protein (BCCP) and then the CO(2) group is transferred by the carboxyltransferase to acetyl-CoA to form malonyl-CoA. The protein is Acetyl-coenzyme A carboxylase carboxyl transferase subunit alpha of Salmonella dublin (strain CT_02021853).